A 145-amino-acid chain; its full sequence is Holo-[acyl-carrier-protein] synthase (145 aa).

Mg(2+)-binding residues include aspartate 9 and glutamate 63.

The protein belongs to the P-Pant transferase superfamily. AcpS family. Requires Mg(2+) as cofactor.

It localises to the cytoplasm. The enzyme catalyses apo-[ACP] + CoA = holo-[ACP] + adenosine 3',5'-bisphosphate + H(+). Functionally, transfers the 4'-phosphopantetheine moiety from coenzyme A to a Ser of acyl-carrier-protein. This is Holo-[acyl-carrier-protein] synthase from Burkholderia vietnamiensis (strain G4 / LMG 22486) (Burkholderia cepacia (strain R1808)).